A 155-amino-acid polypeptide reads, in one-letter code: Small ribosomal subunit protein uS7 (155 aa).

The protein belongs to the universal ribosomal protein uS7 family. As to quaternary structure, part of the 30S ribosomal subunit. Contacts proteins S9 and S11.

Functionally, one of the primary rRNA binding proteins, it binds directly to 16S rRNA where it nucleates assembly of the head domain of the 30S subunit. Is located at the subunit interface close to the decoding center, probably blocks exit of the E-site tRNA. The protein is Small ribosomal subunit protein uS7 of Chlorobium luteolum (strain DSM 273 / BCRC 81028 / 2530) (Pelodictyon luteolum).